The following is a 313-amino-acid chain: Beta-lactamase FAR-1 (313 aa).

Residues 1-28 (MPGVDISFLKKSGRRTMAAAAVIALLGG) form the signal peptide. C29 carries the N-palmitoyl cysteine lipid modification. C29 is lipidated: S-diacylglycerol cysteine. Residue S94 is the Acyl-ester intermediate of the active site. S154 contacts substrate. The active-site Proton acceptor is E190. 258 to 260 (KTG) provides a ligand contact to substrate.

This sequence belongs to the class-A beta-lactamase family.

The protein resides in the cell membrane. The enzyme catalyses a beta-lactam + H2O = a substituted beta-amino acid. Its activity is regulated as follows. Inhibited by clavulanic acid, and at a low level by tazobactam and sulbactam. In terms of biological role, confers high levels of resistance to amoxicillin, benzylpenicillin, piperacillin, ticarcillin and cephalothin. Also hydrolyzes aztreonam at a low level. Not active against ceftazidime, cefotaxime and imipenem. This chain is Beta-lactamase FAR-1 (bla), found in Nocardia farcinica (strain IFM 10152).